The primary structure comprises 245 residues: 14-3-3 protein zeta/delta (245 aa).

Residue Met1 is modified to N-acetylmethionine. An N6-acetyllysine modification is found at Lys3. Ser58 carries the phosphoserine; by PKA modification. Lys68 is modified (N6-acetyllysine). Residues Ser184, Ser207, and Ser210 each carry the phosphoserine modification. Thr232 bears the Phosphothreonine; by CK1 mark.

Belongs to the 14-3-3 family. Interacts with CDK16 and BSPRY. Interacts with WEE1 (C-terminal). Interacts with SAMSN1. Interacts with MLF1 (phosphorylated form); the interaction retains it in the cytoplasm. Interacts with Thr-phosphorylated ITGB2. Interacts with BCL2L11. Homodimer. Heterodimerizes with YWHAE. Homo- and heterodimerization is inhibited by phosphorylation on Ser-58. Interacts with FOXO4, NOXA1, SSH1 and ARHGEF2. Interacts with Pseudomonas aeruginosa exoS (unphosphorylated form). Interacts with BAX; the interaction occurs in the cytoplasm. Under stress conditions, MAPK8-mediated phosphorylation releases BAX to mitochondria. Interacts with phosphorylated RAF1; the interaction is inhibited when YWHAZ is phosphorylated on Thr-232. Interacts with TP53; the interaction enhances p53 transcriptional activity. The Ser-58 phosphorylated form inhibits this interaction and p53 transcriptional activity. Interacts with ABL1 (phosphorylated form); the interaction retains ABL1 in the cytoplasm. Interacts with PKA-phosphorylated AANAT; the interaction modulates AANAT enzymatic activity by increasing affinity for arylalkylamines and acetyl-CoA and protecting the enzyme from dephosphorylation and proteasomal degradation. It may also prevent thiol-dependent inactivation. Interacts with AKT1; the interaction phosphorylates YWHAZ and modulates dimerization. Interacts with GAB2 and TLK2. Interacts with the 'Thr-369' phosphorylated form of DAPK2. Interacts with PI4KB, TBC1D22A and TBC1D22B. Interacts with ZFP36L1 (via phosphorylated form); this interaction occurs in a p38 MAPK- and AKT-signaling pathways. Interacts with SLITRK1. Interacts with AK5, LDB1, MADD, MARK3, PDE1A and SMARCB1. Interacts with YWHAZ. Interacts with MEFV. Interacts with ADAM22 (via C-terminus). The delta, brain-specific form differs from the zeta form in being phosphorylated. Phosphorylation on Ser-184 by MAPK8; promotes dissociation of BAX and translocation of BAX to mitochondria. Phosphorylation on Thr-232; inhibits binding of RAF1. Phosphorylated on Ser-58 by PKA and protein kinase C delta type catalytic subunit in a sphingosine-dependent fashion. Phosphorylation on Ser-58 by PKA; disrupts homodimerization and heterodimerization with YHAE and TP53. As to expression, highly expressed in brain (at protein level).

It is found in the cytoplasm. The protein localises to the melanosome. In terms of biological role, adapter protein implicated in the regulation of a large spectrum of both general and specialized signaling pathways. Binds to a large number of partners, usually by recognition of a phosphoserine or phosphothreonine motif. Binding generally results in the modulation of the activity of the binding partner. Promotes cytosolic retention and inactivation of TFEB transcription factor by binding to phosphorylated TFEB. Induces ARHGEF7 activity on RAC1 as well as lamellipodia and membrane ruffle formation. In neurons, regulates spine maturation through the modulation of ARHGEF7 activity. In Ovis aries (Sheep), this protein is 14-3-3 protein zeta/delta (YWHAZ).